Reading from the N-terminus, the 332-residue chain is D-galactose/methyl-galactoside binding periplasmic protein MglB (332 aa).

An N-terminal signal peptide occupies residues 1–23; it reads MNKKVLTLSAVMASLLFGAHAHA. 2 residues coordinate beta-D-galactose: aspartate 37 and asparagine 114. Residues aspartate 37 and asparagine 114 each contribute to the beta-D-glucose site. Residues aspartate 157, asparagine 159, aspartate 161, lysine 163, and glutamine 165 each coordinate Ca(2+). The beta-D-galactose site is built by histidine 175, aspartate 177, and arginine 181. Beta-D-glucose is bound by residues histidine 175, aspartate 177, and arginine 181. Glutamate 228 contributes to the Ca(2+) binding site. Beta-D-galactose-binding residues include asparagine 234, aspartate 259, and asparagine 279. Residues asparagine 234, aspartate 259, and asparagine 279 each coordinate beta-D-glucose.

It belongs to the bacterial solute-binding protein 2 family. As to quaternary structure, the ABC transporter complex is composed of one ATP-binding protein (MglA), two transmembrane proteins (MglC) and a solute-binding protein (MglB).

The protein resides in the periplasm. Its function is as follows. Part of the ABC transporter complex MglABC involved in galactose/methyl galactoside import. In addition, binds D-galactose and D-glucose and plays a role in the chemotaxis towards these two sugars by interacting with the Trg chemoreceptor. This Salmonella typhimurium (strain LT2 / SGSC1412 / ATCC 700720) protein is D-galactose/methyl-galactoside binding periplasmic protein MglB (mglB).